A 238-amino-acid polypeptide reads, in one-letter code: tRNA (guanine-N(7)-)-methyltransferase (238 aa).

S-adenosyl-L-methionine-binding residues include Glu70, Asp95, Asp122, and Asp145. Asp145 is an active-site residue. Substrate is bound by residues Lys149, Asp181, and Thr216–Glu219.

It belongs to the class I-like SAM-binding methyltransferase superfamily. TrmB family.

It catalyses the reaction guanosine(46) in tRNA + S-adenosyl-L-methionine = N(7)-methylguanosine(46) in tRNA + S-adenosyl-L-homocysteine. The protein operates within tRNA modification; N(7)-methylguanine-tRNA biosynthesis. Functionally, catalyzes the formation of N(7)-methylguanine at position 46 (m7G46) in tRNA. This Neisseria gonorrhoeae (strain ATCC 700825 / FA 1090) protein is tRNA (guanine-N(7)-)-methyltransferase.